The sequence spans 322 residues: tRNA uridine(34) hydroxylase (322 aa).

One can recognise a Rhodanese domain in the interval 126–220 (LAEDTVVIDA…YGKDPEVKGE (95 aa)). The active-site Cysteine persulfide intermediate is the Cys-180.

This sequence belongs to the TrhO family.

It carries out the reaction uridine(34) in tRNA + AH2 + O2 = 5-hydroxyuridine(34) in tRNA + A + H2O. Its function is as follows. Catalyzes oxygen-dependent 5-hydroxyuridine (ho5U) modification at position 34 in tRNAs. The sequence is that of tRNA uridine(34) hydroxylase from Shouchella clausii (strain KSM-K16) (Alkalihalobacillus clausii).